Here is a 250-residue protein sequence, read N- to C-terminus: 5-oxoprolinase subunit A (250 aa).

It belongs to the LamB/PxpA family. In terms of assembly, forms a complex composed of PxpA, PxpB and PxpC.

It carries out the reaction 5-oxo-L-proline + ATP + 2 H2O = L-glutamate + ADP + phosphate + H(+). Catalyzes the cleavage of 5-oxoproline to form L-glutamate coupled to the hydrolysis of ATP to ADP and inorganic phosphate. The chain is 5-oxoprolinase subunit A from Paraburkholderia xenovorans (strain LB400).